A 391-amino-acid polypeptide reads, in one-letter code: Multidrug resistance protein MdtL (391 aa).

The Cytoplasmic segment spans residues 1 to 3 (MSR). Residues 4–24 (FLICSFALVLLYPAGIDMYLV) traverse the membrane as a helical segment. At 25–41 (GLPRIAADLNASEAQLH) the chain is on the periplasmic side. The chain crosses the membrane as a helical span at residues 42–62 (IAFSVYLAGMAAAMLFAGKVA). The Cytoplasmic segment spans residues 63–68 (DRSGRK). A helical membrane pass occupies residues 69 to 89 (PVAIPGAALFIIASVFCSLAE). Residues 90-92 (TSA) lie on the Periplasmic side of the membrane. A helical membrane pass occupies residues 93 to 113 (LFLAGRFLQGLGAGCCYVVAF). Residues 114–130 (AILRDTLDDRRRAKVLS) are Cytoplasmic-facing. Residues 131–151 (LLNGITCIIPVLAPVLGHLIM) form a helical membrane-spanning segment. The Periplasmic segment spans residues 152–157 (LKFPWQ). The helical transmembrane segment at 158-178 (SLFWTMATMGIAVLMLSLFIL) threads the bilayer. At 179–202 (KETRPAAPAASDKPRENSESLLNR) the chain is on the cytoplasmic side. The chain crosses the membrane as a helical span at residues 203-222 (FFLSRVVITTLSVSVILTFV). Residues 223–244 (NTSPVLLMEIMGFERGEYATIM) are Periplasmic-facing. The helical transmembrane segment at 245 to 265 (ALTAGVSMTVSFSTPFALGIF) threads the bilayer. Over 266-268 (KPR) the chain is Cytoplasmic. The chain crosses the membrane as a helical span at residues 269-289 (TLMITSQVLFLAAGITLAVSP). Topologically, residues 290–292 (SHA) are periplasmic. A helical membrane pass occupies residues 293–313 (VSLFGITLICAGFSVGFGVAM). At 314-330 (SQALGPFSLRAGVASST) the chain is on the cytoplasmic side. Residues 331–351 (LGIAQVCGSSLWIWLAAVVGI) traverse the membrane as a helical segment. Over 352 to 355 (GAWN) the chain is Periplasmic. Residues 356-376 (MLIGILIACSIVSLLLIMFVA) form a helical membrane-spanning segment. The Cytoplasmic segment spans residues 377–391 (PGRPVAAHEEIHHHA).

Belongs to the major facilitator superfamily. DHA1 family. MdtL (TC 2.A.1.2.22) subfamily.

The protein resides in the cell inner membrane. Functionally, confers resistance to chloramphenicol. In Escherichia coli O6:K15:H31 (strain 536 / UPEC), this protein is Multidrug resistance protein MdtL.